The primary structure comprises 344 residues: GTPase Obg (344 aa).

One can recognise an Obg domain in the interval 1-159; sequence MKFLDLAKVY…RTIWLRLKLI (159 aa). Residues 160–326 enclose the OBG-type G domain; sequence ADVGLLGLPN…VLRVLRARVD (167 aa). GTP-binding positions include 166-173, 191-195, 212-215, 279-282, and 307-309; these read GLPNAGKS, FTTLV, DIPG, NKID, and SGV. Residues S173 and T193 each coordinate Mg(2+).

This sequence belongs to the TRAFAC class OBG-HflX-like GTPase superfamily. OBG GTPase family. As to quaternary structure, monomer. The cofactor is Mg(2+).

Its subcellular location is the cytoplasm. An essential GTPase which binds GTP, GDP and possibly (p)ppGpp with moderate affinity, with high nucleotide exchange rates and a fairly low GTP hydrolysis rate. Plays a role in control of the cell cycle, stress response, ribosome biogenesis and in those bacteria that undergo differentiation, in morphogenesis control. This is GTPase Obg from Jannaschia sp. (strain CCS1).